The primary structure comprises 234 residues: MLTYETWEENDVSFSKEDETKGALSVLSWAYKEYKSEIVYACSFGVEGMVLLHLINQVNPSAKVVFLDTNVHFQETYELIQKVRERFPSLNIIEKQPKLTLDEQDKLHGDKLWESNPNLCCKIRKILPLEESLANEKAWISGLRREQSETRKHTKFINQDHRFQSIKVCPLIHWTWKEVWRYVYKHSLPYNPLHDIGYPSIGCEKCTLPVGEGGDSRDGRWAGKVKTECGLHYQ.

Cysteine 120, cysteine 121, cysteine 203, and cysteine 206 together coordinate [4Fe-4S] cluster. The active-site Nucleophile; cysteine thiosulfonate intermediate is cysteine 229.

It belongs to the PAPS reductase family. CysH subfamily. [4Fe-4S] cluster serves as cofactor.

It localises to the cytoplasm. The catalysed reaction is [thioredoxin]-disulfide + sulfite + AMP + 2 H(+) = adenosine 5'-phosphosulfate + [thioredoxin]-dithiol. The protein operates within sulfur metabolism; hydrogen sulfide biosynthesis; sulfite from sulfate. Catalyzes the formation of sulfite from adenosine 5'-phosphosulfate (APS) using thioredoxin as an electron donor. The polypeptide is Adenosine 5'-phosphosulfate reductase (Bacillus cereus (strain AH820)).